We begin with the raw amino-acid sequence, 288 residues long: POU domain class 2-associating factor 2 (288 aa).

The 23-residue stretch at 10–32 folds into the OCA domain; the sequence is KRVYQGVRVKHTVKDLLAEKRSG. 2 disordered regions span residues 24–52 and 247–274; these read DLLA…PFVQ and PPKV…VKED. A compositionally biased stretch (low complexity) spans 35 to 48; that stretch reads SNSRLNGSVSSSQS.

The protein belongs to the POU2AF family. Interacts with POU2F3 (via the POU domain) in a DNA-dependent manner; this interaction recruits POU2AF2 to chromatin and increases POU2F3 transactivation activity. In terms of tissue distribution, expressed in tuft cells of colon mucosa, as well as in small intestine and thymus.

The protein localises to the cytoplasm. It is found in the cytosol. Its subcellular location is the nucleus. Transcriptional coactivator of POU2F3. This complex drives the development of tuft cells, a rare chemosensory cells that coordinate immune and neural functions within mucosal epithelial tissues. This Homo sapiens (Human) protein is POU domain class 2-associating factor 2.